The sequence spans 517 residues: Anthranilate--CoA ligase (517 aa).

AMP is bound at residue 161–172; it reads LQYTSGSTGAPK.

This sequence belongs to the ATP-dependent AMP-binding enzyme family. In terms of assembly, monomer.

The catalysed reaction is anthranilate + ATP + CoA = anthraniloyl-CoA + AMP + diphosphate. Functionally, catalyzes the formation of anthraniloyl-CoA, which is the priming step for entry into the Pseudomonas quinolone signal (PQS) biosynthetic pathway. Also active on a variety of aromatic substrates, including benzoate and chloro and fluoro derivatives of anthranilate. This Pseudomonas aeruginosa (strain ATCC 15692 / DSM 22644 / CIP 104116 / JCM 14847 / LMG 12228 / 1C / PRS 101 / PAO1) protein is Anthranilate--CoA ligase (pqsA).